The following is a 736-amino-acid chain: Neprilysin-2 (736 aa).

The Cytoplasmic segment spans residues 1–19; that stretch reads MRPDEEDGTTKSPGSRWTR. Residues 20–40 form a helical; Signal-anchor for type II membrane protein membrane-spanning segment; sequence IWAIIALILLILFLLVLGAAI. The Extracellular segment spans residues 41 to 736; that stretch reads YFYINYKDSS…MNPREKCRVW (696 aa). The Peptidase M13 domain maps to 52–736; that stretch reads VCLSPGCIKT…MNPREKCRVW (685 aa). 5 cysteine pairs are disulfide-bonded: Cys53–Cys58, Cys76–Cys721, Cys84–Cys681, Cys142–Cys399, and Cys608–Cys733. Residues 103–123 adopt a coiled-coil conformation; sequence FENLGQDLEFALKELLDENDE. Position 571 (His571) interacts with Zn(2+). Glu572 is an active-site residue. Residues His575 and Glu633 each coordinate Zn(2+). The active-site Proton donor is the Asp637.

This sequence belongs to the peptidase M13 family. It depends on Zn(2+) as a cofactor. As to expression, expressed in muscle cells, GLR cells, SMB motor neurons and AIM interneurons.

It is found in the membrane. In terms of biological role, required for olfactory plasticity, which is the change from positive chemotaxis to dispersal after prolonged exposure to an odorant. Thought to antagonise snet-1 by degrading excess snet-1 peptides and thus enabling olfactory plasticity. The sequence is that of Neprilysin-2 from Caenorhabditis elegans.